A 441-amino-acid chain; its full sequence is BTB/POZ domain-containing protein At2g24240 (441 aa).

In terms of domain architecture, BTB spans 6 to 76; it reads DRIKFNVGGR…LRTGDLNVPA (71 aa).

It participates in protein modification; protein ubiquitination. May act as a substrate-specific adapter of an E3 ubiquitin-protein ligase complex (CUL3-RBX1-BTB) which mediates the ubiquitination and subsequent proteasomal degradation of target proteins. The protein is BTB/POZ domain-containing protein At2g24240 of Arabidopsis thaliana (Mouse-ear cress).